Here is a 188-residue protein sequence, read N- to C-terminus: ATP synthase subunit b 2 (188 aa).

A helical membrane pass occupies residues 41-61 (FFWLVISFGFFYFFIARVIVP).

Belongs to the ATPase B chain family. In terms of assembly, F-type ATPases have 2 components, F(1) - the catalytic core - and F(0) - the membrane proton channel. F(1) has five subunits: alpha(3), beta(3), gamma(1), delta(1), epsilon(1). F(0) has three main subunits: a(1), b(2) and c(10-14). The alpha and beta chains form an alternating ring which encloses part of the gamma chain. F(1) is attached to F(0) by a central stalk formed by the gamma and epsilon chains, while a peripheral stalk is formed by the delta and b chains.

Its subcellular location is the cell inner membrane. In terms of biological role, f(1)F(0) ATP synthase produces ATP from ADP in the presence of a proton or sodium gradient. F-type ATPases consist of two structural domains, F(1) containing the extramembraneous catalytic core and F(0) containing the membrane proton channel, linked together by a central stalk and a peripheral stalk. During catalysis, ATP synthesis in the catalytic domain of F(1) is coupled via a rotary mechanism of the central stalk subunits to proton translocation. Component of the F(0) channel, it forms part of the peripheral stalk, linking F(1) to F(0). The b'-subunit is a diverged and duplicated form of b found in plants and photosynthetic bacteria. This Bartonella bacilliformis (strain ATCC 35685 / KC583 / Herrer 020/F12,63) protein is ATP synthase subunit b 2 (atpF2).